The following is a 184-amino-acid chain: Ras-related protein O-Krev (184 aa).

Residue 10 to 17 participates in GTP binding; sequence GSGGVGKS. The Effector region signature appears at 32–40; it reads YDPTIEDSY. GTP is bound by residues 57-61 and 116-119; these read DTAGT and NKCD. A Cysteine methyl ester modification is found at Cys181. A lipid anchor (S-geranylgeranyl cysteine) is attached at Cys181. A propeptide spans 182-184 (removed in mature form); sequence TLL.

This sequence belongs to the small GTPase superfamily. Ras family.

It localises to the cell membrane. It carries out the reaction GTP + H2O = GDP + phosphate + H(+). In Diplobatis ommata (Ocellated electric ray), this protein is Ras-related protein O-Krev.